Consider the following 232-residue polypeptide: Cell surface superoxide dismutase [Cu-Zn] 4 (232 aa).

The first 15 residues, 1–15 (MKYLSIISIVALALA), serve as a signal peptide directing secretion. N-linked (GlcNAc...) asparagine glycosylation is present at Asn53. His75 and His77 together coordinate Cu cation. Asn86 is a glycosylation site (N-linked (GlcNAc...) asparagine). His93 serves as a coordination point for Cu cation. Position 93 (His93) interacts with Zn(2+). A glycan (N-linked (GlcNAc...) asparagine) is linked at Asn98. Residue Asp113 coordinates Zn(2+). N-linked (GlcNAc...) asparagine glycosylation occurs at Asn120. His153 provides a ligand contact to Cu cation. 5 N-linked (GlcNAc...) asparagine glycosylation sites follow: Asn156, Asn164, Asn182, Asn193, and Asn196. Residues 174–208 (TASAATWSNSSSSSSSSSKNSTNGSSGSSTSASQG) show a composition bias toward low complexity. The segment at 174–211 (TASAATWSNSSSSSSSSSKNSTNGSSGSSTSASQGSGA) is disordered. Ser209 carries GPI-anchor amidated serine lipidation. Positions 210 to 232 (GAGRAEISGFLAAGIAGVVAALI) are cleaved as a propeptide — removed in mature form. Substrate is bound at residue Arg213.

It belongs to the Cu-Zn superoxide dismutase family. Cu cation serves as cofactor. It depends on Zn(2+) as a cofactor. Post-translationally, the GPI-anchor is attached to the protein in the endoplasmic reticulum and serves to target the protein to the cell surface. There, the glucosamine-inositol phospholipid moiety is cleaved off and the GPI-modified mannoprotein is covalently attached via its lipidless GPI glycan remnant to the 1,6-beta-glucan of the outer cell wall layer.

The protein localises to the secreted. The protein resides in the cell wall. It is found in the membrane. It carries out the reaction 2 superoxide + 2 H(+) = H2O2 + O2. Superoxide dismutases serve to convert damaging superoxide radicals, a key form of ROS, to less damaging hydrogen peroxide that can be converted into water by catalase action. Degrades host-derived reactive oxygen species to escape innate immune surveillance. Involved in the occurrence of miconazole-tolerant persisters in biofilms. Persisters are cells that survive high doses of an antimicrobial agent. This is Cell surface superoxide dismutase [Cu-Zn] 4 (SOD4) from Candida albicans (strain SC5314 / ATCC MYA-2876) (Yeast).